Reading from the N-terminus, the 172-residue chain is Large ribosomal subunit protein uL10 (172 aa).

Belongs to the universal ribosomal protein uL10 family. In terms of assembly, part of the ribosomal stalk of the 50S ribosomal subunit. The N-terminus interacts with L11 and the large rRNA to form the base of the stalk. The C-terminus forms an elongated spine to which L12 dimers bind in a sequential fashion forming a multimeric L10(L12)X complex.

Forms part of the ribosomal stalk, playing a central role in the interaction of the ribosome with GTP-bound translation factors. In Chelativorans sp. (strain BNC1), this protein is Large ribosomal subunit protein uL10.